A 175-amino-acid chain; its full sequence is Bifunctional protein PyrR (175 aa).

Substrate is bound by residues 40-41, R85, 102-110, R135, and V159; these read TR and DDVLYTGRT. The PRPP-binding motif lies at 98 to 110; it reads VIIIDDVLYTGRT.

It belongs to the purine/pyrimidine phosphoribosyltransferase family. PyrR subfamily. In terms of assembly, homodimer and homohexamer; in equilibrium.

The catalysed reaction is UMP + diphosphate = 5-phospho-alpha-D-ribose 1-diphosphate + uracil. Its function is as follows. Regulates transcriptional attenuation of the pyrimidine nucleotide (pyr) operon by binding in a uridine-dependent manner to specific sites on pyr mRNA. This disrupts an antiterminator hairpin in the RNA and favors formation of a downstream transcription terminator, leading to a reduced expression of downstream genes. Also displays a weak uracil phosphoribosyltransferase activity which is not physiologically significant. The sequence is that of Bifunctional protein PyrR from Staphylococcus saprophyticus subsp. saprophyticus (strain ATCC 15305 / DSM 20229 / NCIMB 8711 / NCTC 7292 / S-41).